The sequence spans 81 residues: Translational regulator CsrA (81 aa).

The protein belongs to the CsrA/RsmA family. As to quaternary structure, homodimer; the beta-strands of each monomer intercalate to form a hydrophobic core, while the alpha-helices form wings that extend away from the core.

The protein resides in the cytoplasm. Functionally, a translational regulator that binds mRNA to regulate translation initiation and/or mRNA stability. Usually binds in the 5'-UTR at or near the Shine-Dalgarno sequence preventing ribosome-binding, thus repressing translation. Its main target seems to be the major flagellin gene, while its function is anatagonized by FliW. This is Translational regulator CsrA from Borreliella burgdorferi (strain ATCC 35210 / DSM 4680 / CIP 102532 / B31) (Borrelia burgdorferi).